The sequence spans 559 residues: Beta-glucuronidase (559 aa).

Positions 1 to 19 (MKRILGLIAYASVPTVINA) are cleaved as a signal peptide. N-linked (GlcNAc...) asparagine glycans are attached at residues N53, N91, N99, and N143. The Proton donor role is filled by E194. Residues N203, N222, and N280 are each glycosylated (N-linked (GlcNAc...) asparagine). E312 acts as the Nucleophile in catalysis. N-linked (GlcNAc...) asparagine glycosylation is found at N427, N440, N465, N491, and N520.

It belongs to the glycosyl hydrolase 79 family.

The protein resides in the secreted. The enzyme catalyses a beta-D-glucuronoside + H2O = D-glucuronate + an alcohol. Beta-glucuronidase that hydrolyzes beta-glucuronosyl and 4-O-methyl-beta-glucuronosyl residues of arabinogalactan-protein. Hydrolyzed heparan sulfate only very weakly. Has no activity on xylan from birchwood. Able to catalyze the transglycosylation of glucuronic acid (GlcA) residues from p-nitrophenyl-beta-glucuronic acid (PNP beta-GlcA) to various monosaccharide acceptors such as glucose, galactose and xylose. This Neurospora crassa (strain ATCC 24698 / 74-OR23-1A / CBS 708.71 / DSM 1257 / FGSC 987) protein is Beta-glucuronidase.